The primary structure comprises 79 residues: Dolichyl-diphosphooligosaccharide--protein glycosyltransferase subunit TMEM258 (79 aa).

2 helical membrane-spanning segments follow: residues 17–37 and 55–75; these read VFPH…AWFF and LISL…LLWV.

The protein belongs to the OST5 family. In terms of assembly, component of the oligosaccharyltransferase (OST) complex.

The protein resides in the membrane. Its subcellular location is the endoplasmic reticulum. It is found in the cytoplasm. It functions in the pathway protein modification; protein glycosylation. In terms of biological role, subunit of the oligosaccharyl transferase (OST) complex that catalyzes the initial transfer of a defined glycan (Glc(3)Man(9)GlcNAc(2) in eukaryotes) from the lipid carrier dolichol-pyrophosphate to an asparagine residue within an Asn-X-Ser/Thr consensus motif in nascent polypeptide chains, the first step in protein N-glycosylation. N-glycosylation occurs cotranslationally and the complex associates with the Sec61 complex at the channel-forming translocon complex that mediates protein translocation across the endoplasmic reticulum (ER). All subunits are required for a maximal enzyme activity. In Gallus gallus (Chicken), this protein is Dolichyl-diphosphooligosaccharide--protein glycosyltransferase subunit TMEM258.